Reading from the N-terminus, the 527-residue chain is Metal transporter Nramp6 (527 aa).

12 helical membrane passes run 38–58 (FFSY…PGNF), 71–91 (ELLW…SLAA), 115–135 (FMLW…EVIG), 143–163 (LFNI…LILL), 173–193 (LEFL…VELH), 221–241 (ISLL…ALVL), 264–284 (GLAL…SGAV), 321–341 (LFAI…TYAG), 364–384 (CLAI…GAGK), 385–405 (LIII…VPLL), 427–447 (TWII…SSFI), and 458–478 (VAIV…LAAI).

It belongs to the NRAMP (TC 2.A.55) family. As to expression, expressed in the vascular bundles of shoots, cotyledons, young leaves, sepals and petals, at the top of the flower stem and in the style. Expressed in the peduncle of developing siliques as well as in the septum and the funiculi.

Its subcellular location is the endomembrane system. In terms of biological role, probable intracellular cadmium (Cd) transporter that participates in the distribution or availability of Cd within the cell. The chain is Metal transporter Nramp6 (NRAMP6) from Arabidopsis thaliana (Mouse-ear cress).